A 291-amino-acid chain; its full sequence is Trimeric intracellular cation channel type B (291 aa).

Residues 1-19 (MDSPWDELALAFSRTSMFP) are Lumenal-facing. Residues 20–33 (FFDIAHYLVSVMAV) traverse the membrane as a helical segment. At 34–50 (KRQPGAAALAWKNPISS) the chain is on the cytoplasmic side. The helical transmembrane segment at 51–70 (WFTAMLHCFGGGILSCLLLA) threads the bilayer. Residues 71–82 (EPPLKFLANHTN) lie on the Lumenal side of the membrane. A helical transmembrane segment spans residues 83-99 (ILLASSIWYITFFCPHD). Residues 100–104 (LVSQG) lie on the Cytoplasmic side of the membrane. The helical transmembrane segment at 105–121 (YSYLPVQLLASGMKEVT) threads the bilayer. A 1,2-diacyl-sn-glycero-3-phospho-(1D-myo-inositol-4,5-bisphosphate) contacts are provided by K118 and R122. The Lumenal segment spans residues 122-139 (RTWKIVGGVTHANSYYKN). Residues 140–156 (GWIVMIAIGWARGAGGT) traverse the membrane as a helical segment. Topologically, residues 157–179 (IITNFERLVKGDWKPEGDEWLKM) are cytoplasmic. The helical transmembrane segment at 180–195 (SYPAKVTLLGSVIFTF) threads the bilayer. Residues 196–207 (QHTQHLAISKHN) lie on the Lumenal side of the membrane. The helical transmembrane segment at 208–227 (LMFLYTIFIVATKITMMTTQ) threads the bilayer. Over 228 to 291 (TSTMTFAPFE…VKKKHTKKNE (64 aa)) the chain is Cytoplasmic. A disordered region spans residues 256-291 (KKSEAKSPSNGVGSLASKPVDVASDNVKKKHTKKNE). S262 carries the post-translational modification Phosphoserine.

The protein belongs to the TMEM38 family. Homotrimer; conformation seems to be controled by binding to diacylglycerol (DAG).

The protein localises to the endoplasmic reticulum membrane. It catalyses the reaction K(+)(in) = K(+)(out). Channel activity is activated by increased cytosolic Ca(2+) levels and blocked by luminal high Ca(2+) levels. In terms of biological role, intracellular monovalent cation channel required for maintenance of rapid intracellular calcium release. Acts as a potassium counter-ion channel that functions in synchronization with calcium release from intracellular stores. Activated by increased cytosolic Ca(2+) levels. The polypeptide is Trimeric intracellular cation channel type B (Homo sapiens (Human)).